The chain runs to 766 residues: Sucrose synthase (766 aa).

The interval 220 to 698 (MVFNVVILSV…GLLRIKERYT (479 aa)) is GT-B glycosyltransferase.

The protein belongs to the glycosyltransferase 1 family. Plant sucrose synthase subfamily. Expressed most predominantly in tap root.

It catalyses the reaction an NDP-alpha-D-glucose + D-fructose = a ribonucleoside 5'-diphosphate + sucrose + H(+). Its function is as follows. Sucrose-cleaving enzyme that provides UDP-glucose and fructose for various metabolic pathways. The chain is Sucrose synthase (SS1) from Beta vulgaris (Sugar beet).